We begin with the raw amino-acid sequence, 74 residues long: Protein SOM1, mitochondrial (74 aa).

In terms of assembly, component of the mitochondrial inner membrane peptidase (IMP) complex which at least consists of IMP1, IMP2 and SOM1.

The protein resides in the mitochondrion inner membrane. In terms of biological role, non-catalytic component of the mitochondrial inner membrane peptidase (IMP) complex. IMP catalyzes the removal of signal peptides required for the targeting of proteins from the mitochondrial matrix, across the inner membrane, into the inter-membrane space. SOM1 facilitates cleavage of a subset of IMP substrates. This chain is Protein SOM1, mitochondrial (SOM1), found in Saccharomyces cerevisiae (strain ATCC 204508 / S288c) (Baker's yeast).